Consider the following 177-residue polypeptide: ATP synthase subunit delta (177 aa).

The protein belongs to the ATPase delta chain family. In terms of assembly, F-type ATPases have 2 components, F(1) - the catalytic core - and F(0) - the membrane proton channel. F(1) has five subunits: alpha(3), beta(3), gamma(1), delta(1), epsilon(1). F(0) has three main subunits: a(1), b(2) and c(10-14). The alpha and beta chains form an alternating ring which encloses part of the gamma chain. F(1) is attached to F(0) by a central stalk formed by the gamma and epsilon chains, while a peripheral stalk is formed by the delta and b chains.

The protein resides in the cell inner membrane. Its function is as follows. F(1)F(0) ATP synthase produces ATP from ADP in the presence of a proton or sodium gradient. F-type ATPases consist of two structural domains, F(1) containing the extramembraneous catalytic core and F(0) containing the membrane proton channel, linked together by a central stalk and a peripheral stalk. During catalysis, ATP synthesis in the catalytic domain of F(1) is coupled via a rotary mechanism of the central stalk subunits to proton translocation. Functionally, this protein is part of the stalk that links CF(0) to CF(1). It either transmits conformational changes from CF(0) to CF(1) or is implicated in proton conduction. This is ATP synthase subunit delta from Glaesserella parasuis serovar 5 (strain SH0165) (Haemophilus parasuis).